A 750-amino-acid polypeptide reads, in one-letter code: MIIRSPEPEVKILVDRDPVKTSFEEWARPGHFSRTIAKGPDTTTWIWNLHADAHDFDSHTSDLEEISRKVFSAHFGQLSIIFLWLSGMYFHGARFSNYEAWLSDPTHIGPSAQVVWPIVGQEILNGDVRGGFRGIQITSGFFQIWRASGITSELQLYCTAIGALVFAALMLFAGWFHYHKAAPKLAWFQDVESMLNHHLAGLLGLGSLSWAGHQVHVSLPINQFLNAGVDPKEIPLPHEYILNRDLLAQLYPSFAEGATPFFTLNWSKYADFLTFRGGLDPVTGGLWLTDIAHHHLAIAILFLIAGHMYRTNWGIGHGLKDILEAHKGPFTGQGHKGLYEILTTSWHAQLSLNLAMLGSLTIVVAHHMYSMPPYPYLATDYGTQLSLFTHHMWIGGFLIVGAAAHAAIFMVRDYDPTTRYNDLLDRVLRHRDAIISHLNWACIFLGFHSFGLYIHNDTMSALGRPQDMFSDTAIQLQPVFAQWIQNTHALAPGATAPGATASTSLTWGGGDLVAVGGKVALLPIPLGTADFLVHHIHAFTIHVTVLILLKGVLFARSSRLIPDKANLGFRFPCDGPERGGTCQVSAWDHVFLGLFWMYNAISVVIFHFSWKMQSDVWGSVSDQGVVTHITGGNFAQSSITINGWLRDFLWAQASQVIQSYGSSLSAYGLFFLGAHFVWAFSLMFLFSGRGYWQELIESIVWAHNKLKVAPATQPRALSIIQGRAVGVTHYLLGGIATTWAFFLARIITVG.

Helical transmembrane passes span 70 to 93, 156 to 179, 195 to 219, 291 to 309, 346 to 369, 385 to 411, 433 to 455, and 531 to 549; these read VFSA…FHGA, LYCT…FHYH, LNHH…HVSL, IAHH…GHMY, WHAQ…HHMY, LSLF…IFMV, AIIS…LYIH, and FLVH…LILL. 2 residues coordinate [4Fe-4S] cluster: Cys-573 and Cys-582. 2 helical membrane-spanning segments follow: residues 589–610 and 664–686; these read HVFL…HFSW and LSAY…MFLF. Chlorophyll a' is bound at residue His-675. Chlorophyll a is bound by residues Met-683 and Tyr-691. Residue Trp-692 participates in phylloquinone binding. A helical membrane pass occupies residues 724-744; the sequence is AVGVTHYLLGGIATTWAFFLA.

This sequence belongs to the PsaA/PsaB family. The PsaA/B heterodimer binds the P700 chlorophyll special pair and subsequent electron acceptors. PSI consists of a core antenna complex that captures photons, and an electron transfer chain that converts photonic excitation into a charge separation. The eukaryotic PSI reaction center is composed of at least 11 subunits. The cofactor is P700 is a chlorophyll a/chlorophyll a' dimer, A0 is one or more chlorophyll a, A1 is one or both phylloquinones and FX is a shared 4Fe-4S iron-sulfur center..

It is found in the plastid. The protein resides in the chloroplast thylakoid membrane. It carries out the reaction reduced [plastocyanin] + hnu + oxidized [2Fe-2S]-[ferredoxin] = oxidized [plastocyanin] + reduced [2Fe-2S]-[ferredoxin]. PsaA and PsaB bind P700, the primary electron donor of photosystem I (PSI), as well as the electron acceptors A0, A1 and FX. PSI is a plastocyanin-ferredoxin oxidoreductase, converting photonic excitation into a charge separation, which transfers an electron from the donor P700 chlorophyll pair to the spectroscopically characterized acceptors A0, A1, FX, FA and FB in turn. Oxidized P700 is reduced on the lumenal side of the thylakoid membrane by plastocyanin. This is Photosystem I P700 chlorophyll a apoprotein A1 from Atropa belladonna (Belladonna).